Consider the following 152-residue polypeptide: Deoxyuridine 5'-triphosphate nucleotidohydrolase (152 aa).

Residues 71–73 (RSG), N84, 88–90 (LID), and M98 contribute to the substrate site.

The protein belongs to the dUTPase family. Requires Mg(2+) as cofactor.

The catalysed reaction is dUTP + H2O = dUMP + diphosphate + H(+). The protein operates within pyrimidine metabolism; dUMP biosynthesis; dUMP from dCTP (dUTP route): step 2/2. This enzyme is involved in nucleotide metabolism: it produces dUMP, the immediate precursor of thymidine nucleotides and it decreases the intracellular concentration of dUTP so that uracil cannot be incorporated into DNA. In Shewanella sp. (strain ANA-3), this protein is Deoxyuridine 5'-triphosphate nucleotidohydrolase.